The sequence spans 165 residues: MLTKRLLTIYIMLLGLIAWFPGAAQAEEKQPAVPAVFLMKTIEGEDISIPNKGQKTILHFWTSWCPPCKKELPQFQSFYDAHPSDSVKLVTVNLVNSEQNQQVVEDFIKANKLTFPIVLDSKGELMKEYHIITIPTSFLLNEKGEIEKTKIGPMTAEQLKEWTEE.

The first 26 residues, Met1–Ala26, serve as a signal peptide directing secretion. The Thioredoxin domain occupies Glu27–Glu165. An intrachain disulfide couples Cys65 to Cys68.

It belongs to the thioredoxin family.

Its subcellular location is the spore outer membrane. Its function is as follows. Thiol-disulfide oxidoreductase with a reductive function, involved in spore cortex synthesis. It could be involved either in breaking disulfide bonds in cortex components or in proteins that are important for cortex synthesis, or in thiol/disulfide bond interchange. This chain is Sporulation thiol-disulfide oxidoreductase A (stoA), found in Bacillus subtilis (strain 168).